The primary structure comprises 230 residues: Protein-L-isoaspartate O-methyltransferase (230 aa).

S65 is a catalytic residue.

The protein belongs to the methyltransferase superfamily. L-isoaspartyl/D-aspartyl protein methyltransferase family. As to quaternary structure, monomer. As to expression, highest contents in seeds.

The protein resides in the cytoplasm. It catalyses the reaction [protein]-L-isoaspartate + S-adenosyl-L-methionine = [protein]-L-isoaspartate alpha-methyl ester + S-adenosyl-L-homocysteine. In terms of biological role, catalyzes the methyl esterification of L-isoaspartyl residues in peptides and proteins that result from spontaneous decomposition of normal L-aspartyl and L-asparaginyl residues. It plays a role in the repair and/or degradation of damaged proteins. This enzyme does not act on D-aspartyl residues. The protein is Protein-L-isoaspartate O-methyltransferase (PCM) of Triticum aestivum (Wheat).